The sequence spans 460 residues: ATP synthase subunit beta (460 aa).

150 to 157 (GGAGVGKT) serves as a coordination point for ATP.

This sequence belongs to the ATPase alpha/beta chains family. In terms of assembly, F-type ATPases have 2 components, CF(1) - the catalytic core - and CF(0) - the membrane proton channel. CF(1) has five subunits: alpha(3), beta(3), gamma(1), delta(1), epsilon(1). CF(0) has three main subunits: a(1), b(2) and c(9-12). The alpha and beta chains form an alternating ring which encloses part of the gamma chain. CF(1) is attached to CF(0) by a central stalk formed by the gamma and epsilon chains, while a peripheral stalk is formed by the delta and b chains.

The protein resides in the cell inner membrane. The catalysed reaction is ATP + H2O + 4 H(+)(in) = ADP + phosphate + 5 H(+)(out). Functionally, produces ATP from ADP in the presence of a proton gradient across the membrane. The catalytic sites are hosted primarily by the beta subunits. This is ATP synthase subunit beta from Yersinia pestis bv. Antiqua (strain Angola).